We begin with the raw amino-acid sequence, 908 residues long: DNA polymerase I (908 aa).

The region spanning Met1–Asn318 is the 5'-3' exonuclease domain. Residues Val319–Lys531 form the 3'-5' exonuclease domain. The segment at Glu532–His908 is polymerase.

It belongs to the DNA polymerase type-A family.

The enzyme catalyses DNA(n) + a 2'-deoxyribonucleoside 5'-triphosphate = DNA(n+1) + diphosphate. In addition to polymerase activity, this DNA polymerase exhibits 3'-5' and 5'-3' exonuclease activity. In Borreliella burgdorferi (strain ATCC 35210 / DSM 4680 / CIP 102532 / B31) (Borrelia burgdorferi), this protein is DNA polymerase I (polA).